Here is a 370-residue protein sequence, read N- to C-terminus: ATP synthase gamma chain, chloroplastic (370 aa).

Residues 1–54 constitute a chloroplast transit peptide; sequence MRSFCIAALLAVASAFTTQPTSFTVKTANVGERASGVFPEQSSAHRTRKATIVM. Cys145 is a catalytic residue.

It belongs to the ATPase gamma chain family. In terms of assembly, F-type ATPases have 2 components, CF(1) - the catalytic core - and CF(0) - the membrane proton channel. CF(1) has five subunits: alpha(3), beta(3), gamma(1), delta(1), epsilon(1). CF(0) has four main subunits: a, b, b' and c.

It localises to the plastid. The protein resides in the chloroplast thylakoid membrane. Its function is as follows. Produces ATP from ADP in the presence of a proton gradient across the membrane. The gamma chain is believed to be important in regulating ATPase activity and the flow of protons through the CF(0) complex. The polypeptide is ATP synthase gamma chain, chloroplastic (ATPC) (Phaeodactylum tricornutum (Diatom)).